Consider the following 475-residue polypeptide: Isocitrate dehydrogenase [NADP] (475 aa).

Thr-104 is an NADP(+) binding site. Residues Ser-113, Asn-115, Arg-119, Arg-129, and Arg-153 each contribute to the D-threo-isocitrate site. Residue Asp-362 coordinates Mg(2+). Residues His-394 to His-400, Asn-407, Tyr-446, and Arg-450 each bind NADP(+).

Belongs to the isocitrate and isopropylmalate dehydrogenases family. Homodimer. It depends on Mg(2+) as a cofactor. Mn(2+) is required as a cofactor.

It localises to the cytoplasm. It catalyses the reaction D-threo-isocitrate + NADP(+) = 2-oxoglutarate + CO2 + NADPH. Inhibited non-competitively by ADP and 2-oxoglutarate, with respect to isocitrate and in a competitive manner by NADPH. In terms of biological role, catalyzes the oxidative decarboxylation of isocitrate to 2-oxoglutarate and carbon dioxide with the concomitant reduction of NADP(+). Is specific for NADP(+), cannot use NAD(+). This Synechocystis sp. (strain ATCC 27184 / PCC 6803 / Kazusa) protein is Isocitrate dehydrogenase [NADP].